We begin with the raw amino-acid sequence, 465 residues long: Glutamate--tRNA ligase 1 (465 aa).

The 'HIGH' region motif lies at 8–18; sequence PSPTGNLHIGG. The 'KMSKS' region signature appears at 236-240; it reads KLSKR. Lysine 239 is a binding site for ATP.

Belongs to the class-I aminoacyl-tRNA synthetase family. Glutamate--tRNA ligase type 1 subfamily. In terms of assembly, monomer.

Its subcellular location is the cytoplasm. The catalysed reaction is tRNA(Glu) + L-glutamate + ATP = L-glutamyl-tRNA(Glu) + AMP + diphosphate. Functionally, catalyzes the attachment of glutamate to tRNA(Glu) in a two-step reaction: glutamate is first activated by ATP to form Glu-AMP and then transferred to the acceptor end of tRNA(Glu). This chain is Glutamate--tRNA ligase 1, found in Wolinella succinogenes (strain ATCC 29543 / DSM 1740 / CCUG 13145 / JCM 31913 / LMG 7466 / NCTC 11488 / FDC 602W) (Vibrio succinogenes).